A 630-amino-acid chain; its full sequence is MCSPTNFLYEPFSSDAVTQNYDQNLKCTKCGAYYSMACSLREQNVWTCLFCNQSNSNAELPLVPSNTYTLTSAKKEILSRRTIMIIDAICDPHELNYLVSILCNNYITRQQEPLSIITIQQSGHVILHNAVNHRRDAVFSINEFMTKYNLDKLNASYFEKKISEINQESYWFDKSTQGSLRKLLREICKIANKVNISSKRDKRCTGLALFVSSVLASQCSLSAYCHIVSFLNGPCTKGGGKVMSRERGESMRQNHHFESKSSQLQLSKSPTKFYKKMLEKFANQSLIYEFFIASLDQIGILEMSPLITSSMAVSQFDSFNDERFAMSFQKYLNLRDHNAIYNCHSKIMTAKNAIVVKDFPKYSLNPKNLSLPLEISLGHNSAEAPIQFQTTFENQTEKYIRIETLLLPKANRSFGAQNEIVFSMKKIASRIIDSFAYSSKHTKELMKQLFLLPNQIRGKDVDMVNLIQWCYHIYRSPILSVRNTSPDERYLFLHRIINASKDTCLSLCKPFIWSYSDLKHDWIVLDVPLTRAQILQDDKTTICVDGGSYLVLRRGKLLEKEGRELCCKLLNDLQRFPQPLYVETKTGGSQDRFLKSKIIPLDITDKETLGTEDMTFNEYFNLFTDLSGSK.

Belongs to the SEC23/SEC24 family. SEC23 subfamily.

Its subcellular location is the cytoplasm. The protein resides in the nucleus. Its function is as follows. Acts as a GTPase-activating protein (GAP) for SAR1. Contrary to its SEC23 homolog, NEL1 does not associate with SEC24 and its homologs, nor does it associate with the COPII components, suggesting that it is unlikely that NEL1 functions as a structural component of the vesicle coat machinery. May function as a signaling molecule. This Saccharomyces cerevisiae (strain ATCC 204508 / S288c) (Baker's yeast) protein is GTPase-activating protein NEL1.